Consider the following 348-residue polypeptide: Ferredoxin--NADP reductase 1 (348 aa).

7 residues coordinate FAD: Asp-33, Lys-41, Tyr-45, Val-85, Leu-120, Asp-287, and Ser-328.

Belongs to the ferredoxin--NADP reductase type 2 family. As to quaternary structure, homodimer. Requires FAD as cofactor.

It catalyses the reaction 2 reduced [2Fe-2S]-[ferredoxin] + NADP(+) + H(+) = 2 oxidized [2Fe-2S]-[ferredoxin] + NADPH. This chain is Ferredoxin--NADP reductase 1, found in Oceanobacillus iheyensis (strain DSM 14371 / CIP 107618 / JCM 11309 / KCTC 3954 / HTE831).